Here is a 773-residue protein sequence, read N- to C-terminus: MPKVMKDVVHPLGGEEPSMARAVVRSVGGFTLGLSLATAYGLLELLVEGHSPWGCLVGTLTLAAFLSLGMGFSRQVRATVLLLLPQAFSRQGRTLLLVAAFGLVLQGPCANTLRNFTRASEAVACGAELALNQTAEVLQRAKQPLVSALNKIKAIARKTKEVADRVRKFFRSIMDGVKHIARALRNVWQWLLHIGDVCNSELGNPYLKCARVFDDAKDSCMMVIPQAYHLCYVLMPFKLALCGLASLVQVFCVIPKYIQPFLRQTIGTPVIQLLNRVRQEFEFNMTATHHFSVDLNASRSLSQVAMDLHEAVSMKLHRVREALALMGFTTPLLLVLLYLQALFYRYCYLNWDHYDNIYITSRFLRMEAVRSTAGLPTVLPLSAHEARRYIPPGSIFLSQWEKFFYILETFNLIRHLLLVLFLVFLDYAVFWVLDLARHQLQGEIVARSPVLVSLTVEGTGYAGNIYRDLVSAFDVLQQGNISILSRRCLLRPSEPDSTGYIVIGVMYGLCFFITLFGSYVSRLRRVICASYYPSREQERISYLYNVLLSRRTNLLAALHRSVRRRAADQGHRSAFLVLASRCPCLGPFVSHFWLHQAYCLGCGQPQDEGDMENTVSCSTPGCQGLYCLTCFRLLDNTCSVCASPLSYQGDLDLELDSSDEEGPQLWLAAAQRKDPEQAWLLQQQLQEVLGRSLSMESTSESSDLDEEKGPQQRKHGQQPLPEAHQPVSILTSPEPHRPPETSSATKGAPTPASEPSVPLSPPSLPDPSHPPPK.

Topologically, residues Met1–Ser26 are cytoplasmic. A helical transmembrane segment spans residues Val27–Val47. At Glu48–Ser51 the chain is on the extracellular side. The chain crosses the membrane as a helical span at residues Pro52–Phe72. Topologically, residues Ser73–Val233 are cytoplasmic. The chain crosses the membrane as a helical span at residues Leu234–Ile254. The Extracellular portion of the chain corresponds to Pro255–Ala322. 2 N-linked (GlcNAc...) asparagine glycosylation sites follow: Asn284 and Asn296. A helical membrane pass occupies residues Leu323 to Phe343. The Cytoplasmic portion of the chain corresponds to Tyr344 to His415. A helical transmembrane segment spans residues Leu416–Ala436. Over Arg437–Gly499 the chain is Extracellular. Asn480 carries an N-linked (GlcNAc...) asparagine glycan. Residues Tyr500 to Val520 form a helical membrane-spanning segment. Topologically, residues Ser521–Lys773 are cytoplasmic. The span at Ser692–Ser701 shows a compositional bias: low complexity. The disordered stretch occupies residues Ser692 to Lys773. Over residues Pro758–Lys773 the composition is skewed to pro residues.

Interacts with DCST1.

It is found in the cytoplasmic vesicle. It localises to the secretory vesicle. The protein localises to the acrosome membrane. Its function is as follows. Essential sperm cell-surface protein required for sperm-egg fusion and fertilization. The chain is DC-STAMP domain-containing protein 2 (DCST2) from Homo sapiens (Human).